The chain runs to 213 residues: MOB kinase activator-like 1 homolog A (213 aa).

Zn(2+) is bound by residues cysteine 77, cysteine 82, histidine 159, and histidine 164.

It belongs to the MOB1/phocein family.

This Dictyostelium discoideum (Social amoeba) protein is MOB kinase activator-like 1 homolog A (mobA).